The primary structure comprises 344 residues: Heme A synthase (344 aa).

Transmembrane regions (helical) follow at residues 20–40, 104–124, 135–155, 170–190, 205–225, 233–253, 265–285, 296–316, and 317–337; these read IAWW…VGGL, RFLG…FVVT, LIFL…MVMS, AHLG…LDLL, AAAI…VAGI, TWPL…TPVW, FQHR…WWAA, WLAV…LWVV, and PIPL…VAVW. His-267 contacts heme. His-324 is a binding site for heme.

The protein belongs to the COX15/CtaA family. Type 2 subfamily. Interacts with CtaB. The cofactor is heme b.

It is found in the cell membrane. It catalyses the reaction Fe(II)-heme o + 2 A + H2O = Fe(II)-heme a + 2 AH2. It functions in the pathway porphyrin-containing compound metabolism; heme A biosynthesis; heme A from heme O: step 1/1. Functionally, catalyzes the conversion of heme O to heme A by two successive hydroxylations of the methyl group at C8. The first hydroxylation forms heme I, the second hydroxylation results in an unstable dihydroxymethyl group, which spontaneously dehydrates, resulting in the formyl group of heme A. In Parvibaculum lavamentivorans (strain DS-1 / DSM 13023 / NCIMB 13966), this protein is Heme A synthase.